Consider the following 326-residue polypeptide: Beta-ketoacyl-[acyl-carrier-protein] synthase III (326 aa).

Catalysis depends on residues cysteine 112 and histidine 251. Positions 252–256 are ACP-binding; sequence QANSR. Asparagine 281 is a catalytic residue.

The protein belongs to the thiolase-like superfamily. FabH family. Homodimer.

It is found in the cytoplasm. The enzyme catalyses malonyl-[ACP] + acetyl-CoA + H(+) = 3-oxobutanoyl-[ACP] + CO2 + CoA. Its pathway is lipid metabolism; fatty acid biosynthesis. Functionally, catalyzes the condensation reaction of fatty acid synthesis by the addition to an acyl acceptor of two carbons from malonyl-ACP. Catalyzes the first condensation reaction which initiates fatty acid synthesis and may therefore play a role in governing the total rate of fatty acid production. Possesses both acetoacetyl-ACP synthase and acetyl transacylase activities. Its substrate specificity determines the biosynthesis of branched-chain and/or straight-chain of fatty acids. The chain is Beta-ketoacyl-[acyl-carrier-protein] synthase III from Clostridium botulinum (strain 657 / Type Ba4).